Reading from the N-terminus, the 508-residue chain is Ribose import ATP-binding protein RbsA 2 (508 aa).

2 consecutive ABC transporter domains span residues 6–241 (LTIH…VGRE) and 254–499 (ERSG…SGMG). An ATP-binding site is contributed by 38–45 (GENGAGKS).

This sequence belongs to the ABC transporter superfamily. Ribose importer (TC 3.A.1.2.1) family. The complex is composed of an ATP-binding protein (RbsA), two transmembrane proteins (RbsC) and a solute-binding protein (RbsB).

It localises to the cell inner membrane. It catalyses the reaction D-ribose(out) + ATP + H2O = D-ribose(in) + ADP + phosphate + H(+). Part of the ABC transporter complex RbsABC involved in ribose import. Responsible for energy coupling to the transport system. In Rhizobium etli (strain ATCC 51251 / DSM 11541 / JCM 21823 / NBRC 15573 / CFN 42), this protein is Ribose import ATP-binding protein RbsA 2.